Consider the following 365-residue polypeptide: Cytosolic 5'-nucleotidase 1A (365 aa).

The span at 1 to 11 (MEPGQPREARE) shows a compositional bias: basic and acidic residues. Positions 1–23 (MEPGQPREAREPGPGAETAAVPR) are disordered. The Nucleophile role is filled by Asp208.

Belongs to the 5'-nucleotidase type 3 family. Mg(2+) serves as cofactor.

The protein resides in the cytoplasm. It catalyses the reaction a ribonucleoside 5'-phosphate + H2O = a ribonucleoside + phosphate. It carries out the reaction a 2'-deoxyribonucleoside 5'-phosphate + H2O = a 2'-deoxyribonucleoside + phosphate. The catalysed reaction is IMP + H2O = inosine + phosphate. The enzyme catalyses AMP + H2O = adenosine + phosphate. It catalyses the reaction dCMP + H2O = 2'-deoxycytidine + phosphate. With respect to regulation, activated by ADP. Functionally, catalyzes the hydrolysis of ribonucleotide and deoxyribonucleotide monophosphates, releasing inorganic phosphate and the corresponding nucleoside. AMP is the major substrate but can also hydrolyze dCMP and IMP. This Mus musculus (Mouse) protein is Cytosolic 5'-nucleotidase 1A (Nt5c1a).